We begin with the raw amino-acid sequence, 244 residues long: Monothiol glutaredoxin-4 (244 aa).

The Thioredoxin domain occupies 2-106 (SVEITFVEQF…LKAAIDEYIQ (105 aa)). The 98-residue stretch at 147–244 (NERLSTLTNA…NGELQEMLPN (98 aa)) folds into the Glutaredoxin domain. Lys-164 contacts glutathione. Residue Cys-172 participates in [2Fe-2S] cluster binding. Glutathione is bound by residues 201–205 (RQGLK) and 226–227 (LD).

It belongs to the glutaredoxin family. Monothiol subfamily. Homodimer. Interacts with php4.

Its subcellular location is the cytoplasm. The protein localises to the nucleus. In terms of biological role, monothiol glutaredoxin involved in the biogenesis of iron-sulfur clusters. Binds one iron-sulfur cluster per dimer. The iron-sulfur cluster is bound between subunits, and is complexed by a bound glutathione and a cysteine residue from each subunit. This Schizosaccharomyces pombe (strain 972 / ATCC 24843) (Fission yeast) protein is Monothiol glutaredoxin-4 (grx4).